A 434-amino-acid chain; its full sequence is GTPase Obg (434 aa).

The region spanning 1–159 is the Obg domain; the sequence is MQFIDRCQIK…KTVRLELKYL (159 aa). Residues 160-329 enclose the OBG-type G domain; the sequence is ANVGIVGYPN…LVDRVFDLYQ (170 aa). Residues 166 to 173, 191 to 195, 212 to 215, 282 to 285, and 310 to 312 contribute to the GTP site; these read GYPNAGKS, FTTLV, DIPG, NKMD, and ISA. Mg(2+)-binding residues include serine 173 and threonine 193. An OCT domain is found at 356–434; it reads EKTIDDDPLD…ICDYEYLIDE (79 aa).

The protein belongs to the TRAFAC class OBG-HflX-like GTPase superfamily. OBG GTPase family. As to quaternary structure, monomer. It depends on Mg(2+) as a cofactor.

It is found in the cytoplasm. Functionally, an essential GTPase which binds GTP, GDP and possibly (p)ppGpp with moderate affinity, with high nucleotide exchange rates and a fairly low GTP hydrolysis rate. Plays a role in control of the cell cycle, stress response, ribosome biogenesis and in those bacteria that undergo differentiation, in morphogenesis control. In Mycoplasmoides gallisepticum (strain R(low / passage 15 / clone 2)) (Mycoplasma gallisepticum), this protein is GTPase Obg.